The primary structure comprises 610 residues: MTDLFDYKEFLKTVTSQPGVYRMYDTAGTVIYVGKAKDLKKRLTSYFRAQVANRKTETLVKNIAQIDVTVTHTETEALLLEHNYIKLYQPRYNVLLRDDKSYPLIFLSADEHPRLAVHRGAKHEKGEYFGPFPNSYAVRETLALLQKLFPVRQCENSVYRNRSRPCLQYQIGRCSGPCVEGLVSEEEYQRQVDYVRLFLSGKDQQVLTQLITRMEEASQQLHFEDAARIRDQIQAVRRVTEQQFVSGDSEDLDVIGVAFDAGLACVHVLFIRLGKVLGSRSYFPKVPAGTELSEVVQTFVGQFYLQGSQGRTLPGEILLDFTLTEKDLLASSLSELAGRKIQIQSRPRGDRARYLKLARTNASTALITRLSQQSTIHQRMKELAKVLKLDEINRMECFDISHTMGEQTVASCVVFDANGPVRSEYRRYNISGITPGDDYAAMAQVLKRRYGKALDDQKIPDVIFIDGGKGQLSQAFDVFASLNVPWDKQKPLLVGVAKGSDRKAGLETLFLASEGEGFSLPPDSPALHLIQHIRDDSHNHAITGHRQRRSKVKNTSALEMIEGVGPKRRQVLLKYMGGLQPLFNASVEEIAKVPGISQALAEKIHNALKH.

In terms of domain architecture, GIY-YIG spans 16 to 94 (SQPGVYRMYD…IKLYQPRYNV (79 aa)). One can recognise a UVR domain in the interval 204-239 (QQVLTQLITRMEEASQQLHFEDAARIRDQIQAVRRV).

The protein belongs to the UvrC family. As to quaternary structure, interacts with UvrB in an incision complex.

It is found in the cytoplasm. Its function is as follows. The UvrABC repair system catalyzes the recognition and processing of DNA lesions. UvrC both incises the 5' and 3' sides of the lesion. The N-terminal half is responsible for the 3' incision and the C-terminal half is responsible for the 5' incision. The sequence is that of UvrABC system protein C from Yersinia pseudotuberculosis serotype O:1b (strain IP 31758).